Here is an 81-residue protein sequence, read N- to C-terminus: Centromere protein X (81 aa).

Met1 carries the post-translational modification N-acetylmethionine.

This sequence belongs to the CENP-X/MHF2 family. As to quaternary structure, heterodimer with CENPX, sometimes called MHF; this interaction stabilizes both partners. MHF heterodimers can assemble to form tetrameric structures. MHF also coassemble with CENPT-CENPW heterodimers at centromeres to form the tetrameric CENP-T-W-S-X complex. Forms a discrete complex with FANCM and CENPX, called FANCM-MHF; this interaction, probably mediated by direct binding between CENPS and FANCM, leads to synergistic activation of double-stranded DNA binding and strongly stimulates FANCM-mediated DNA remodeling. Recruited by FANCM to the Fanconi anemia (FA) core complex, which consists of CENPS, CENPX, FANCA, FANCB, FANCC, FANCE, FANCF, FANCG, FANCL, FANCM, FAAP24 and FAAP100. The FA core complex associates with Bloom syndrome (BLM) complex, which consists of at least BLM, DNA topoisomerase 3-alpha (TOP3A), RMI1/BLAP75, RPA1/RPA70 and RPA2/RPA32. The super complex between FA and BLM is called BRAFT.

It localises to the nucleus. The protein resides in the chromosome. Its subcellular location is the centromere. It is found in the kinetochore. In terms of biological role, DNA-binding component of the Fanconi anemia (FA) core complex. Required for the normal activation of the FA pathway, leading to monoubiquitination of the FANCI-FANCD2 complex in response to DNA damage, cellular resistance to DNA cross-linking drugs, and prevention of chromosomal breakage. In complex with CENPS (MHF heterodimer), crucial cofactor for FANCM in both binding and ATP-dependent remodeling of DNA. Stabilizes FANCM. In complex with CENPS and FANCM (but not other FANC proteins), rapidly recruited to blocked forks and promotes gene conversion at blocked replication forks. In complex with CENPS, CENPT and CENPW (CENP-T-W-S-X heterotetramer), involved in the formation of a functional kinetochore outer plate, which is essential for kinetochore-microtubule attachment and faithful mitotic progression. As a component of MHF and CENP-T-W-S-X complexes, binds DNA and bends it to form a nucleosome-like structure. DNA-binding function is fulfilled in the presence of CENPS, with the following preference for DNA substates: Holliday junction &gt; double-stranded &gt; splay arm &gt; single-stranded. Does not bind DNA on its own. This Pongo abelii (Sumatran orangutan) protein is Centromere protein X (CENPX).